Consider the following 1093-residue polypeptide: Leukemia inhibitory factor receptor (1093 aa).

Positions 1–43 are cleaved as a signal peptide; the sequence is MGAFSWWRQPSWMADNKRGRMTPSLPWLLSALTLLHLMMHVNG. The Extracellular portion of the chain corresponds to 44-829; that stretch reads LKRGVQQDLK…SMFVVTKENS (786 aa). One can recognise a Fibronectin type-III 1 domain in the interval 45–127; that stretch reads KRGVQQDLKC…QSKFTLNEKD (83 aa). Intrachain disulfides connect cysteine 54-cysteine 64 and cysteine 81-cysteine 89. 4 N-linked (GlcNAc...) asparagine glycosylation sites follow: asparagine 165, asparagine 200, asparagine 239, and asparagine 262. Disulfide bonds link cysteine 209-cysteine 266 and cysteine 337-cysteine 347. Fibronectin type-III domains follow at residues 331–428, 431–530, 534–625, 623–715, and 720–829; these read VPQK…ERVA, VPIS…TEAT, GPDT…IPND, PNDD…IGYI, and PIVA…KENS. N-linked (GlcNAc...) asparagine glycans are attached at residues asparagine 386, asparagine 403, asparagine 422, asparagine 441, asparagine 454, and asparagine 477. Residues cysteine 462 and cysteine 507 are joined by a disulfide bond. The short motif at 515–519 is the WSXWS motif element; sequence WSKWS. Asparagine 568, asparagine 648, asparagine 659, asparagine 676, asparagine 725, and asparagine 783 each carry an N-linked (GlcNAc...) asparagine glycan. The helical transmembrane segment at 830–850 threads the bilayer; the sequence is VGLIIAILIPVAVAVIVGVVT. Over 851-1093 the chain is Cytoplasmic; that stretch reads SILCYRKREW…TNFFQNKPND (243 aa). Positions 865 to 873 match the Box 1 motif motif; sequence FYPDIPNPE. Disordered stretches follow at residues 908–941 and 1003–1093; these read ESRS…ENQA and LPIN…KPND. Serine 923 and serine 1040 each carry phosphoserine. Composition is skewed to polar residues over residues 1028–1063 and 1082–1093; these read ANVN…NSRQ and SFTNFFQNKPND.

It belongs to the type I cytokine receptor family. Type 2 subfamily. In terms of assembly, heterodimer composed of LIFR and IL6ST. The heterodimer formed by LIFR and IL6ST interacts with the complex formed by CNTF and CNTFR.

It is found in the cell membrane. Functionally, signal-transducing molecule. May have a common pathway with IL6ST. The soluble form inhibits the biological activity of LIF by blocking its binding to receptors on target cells. This chain is Leukemia inhibitory factor receptor (Lifr), found in Rattus norvegicus (Rat).